Consider the following 1051-residue polypeptide: Protein transport protein Sec16B (1051 aa).

Positions 1-23 are enriched in polar residues; that stretch reads MEPWVPQTQGRTTGPSRDTNRGL. The tract at residues 1 to 109 is disordered; it reads MEPWVPQTQG…PYQRYHTPTP (109 aa). Over residues 39-63 the composition is skewed to basic and acidic residues; it reads DKYHQWQDAHKNSKSQQDLRDDHQQ. Over residues 64 to 77 the composition is skewed to polar residues; the sequence is SHSVSRSGEWSQPV. 2 positions are modified to phosphoserine: S70 and S137. Positions 157–203 are disordered; that stretch reads EKHNGTFGANSDTQFQFTSKNPYRDSPASVSGQEQPGEFFPESEAQK. The segment covering 163 to 177 has biased composition (polar residues); it reads FGANSDTQFQFTSKN. 3 positions are modified to phosphoserine: S182, S185, and S245. The interval 263 to 708 is central conserved domain (CCD); required for localization to endoplasmic reticulum exit sites; the sequence is APMRFYVPHV…KHKDLEQNRT (446 aa). Over residues 703-715 the composition is skewed to basic and acidic residues; it reads LEQNRTGAPRDPD. Disordered stretches follow at residues 703–754, 798–820, and 850–1051; these read LEQN…LWST, SGAS…EDML, and TPAA…TQPC. Over residues 737-754 the composition is skewed to polar residues; sequence GHQNYSEDSEYSSTLWST. Residues 798–809 show a composition bias toward low complexity; sequence SGASGSSVAVTG. T850 is subject to Phosphothreonine. S860, S863, S866, S874, and S875 each carry phosphoserine. Over residues 877 to 897 the composition is skewed to basic and acidic residues; that stretch reads GADKPSHPDASQKGKLGDGKN. The span at 900–920 shows a compositional bias: low complexity; that stretch reads SSGFGWFSWFRSKPASSVSTS. Residues 921-932 show a composition bias toward acidic residues; that stretch reads GDEDSSDSSDSE. Residues 936–947 are compositionally biased toward low complexity; that stretch reads RASSPHHASPGL. Positions 984 to 993 are enriched in gly residues; that stretch reads EGMGIGGFSG. Residues 1022-1037 are compositionally biased toward polar residues; it reads NPSQVPQLPTASSLNR.

This sequence belongs to the SEC16 family. As to quaternary structure, SEC16A and SEC16B are each present in multiple copies in a heteromeric complex. Interacts with TFG. Interacts with SEC13. Liver.

The protein resides in the endoplasmic reticulum membrane. It is found in the golgi apparatus membrane. Plays a role in the organization of the endoplasmic reticulum exit sites (ERES), also known as transitional endoplasmic reticulum (tER). Required for secretory cargo traffic from the endoplasmic reticulum to the Golgi apparatus. Involved in peroxisome biogenesis. Regulates the transport of peroxisomal biogenesis factors PEX3 and PEX16 from the ER to peroxisomes. The polypeptide is Protein transport protein Sec16B (Sec16b) (Mus musculus (Mouse)).